Reading from the N-terminus, the 1022-residue chain is Integrator complex subunit 4 (1022 aa).

Residues threonine 148 and lysine 184 each coordinate 1D-myo-inositol hexakisphosphate. The disordered stretch occupies residues lysine 818 to aspartate 840.

Belongs to the Integrator subunit 4 family. In terms of assembly, belongs to the multiprotein complex Integrator, at least composed of IntS1, IntS2, IntS3, IntS4, omd/IntS5, IntS6, defl/IntS7, IntS8, IntS9, IntS10, IntS11, IntS12, asun/IntS13, IntS14 and IntS15. The core complex associates with protein phosphatase 2A subunits mts/PP2A and Pp2A-29B, to form the Integrator-PP2A (INTAC) complex. IntS4 is part of the RNA endonuclease subcomplex, composed of IntS4, IntS9, IntS11 and inositol hexakisphosphate (InsP6).

It localises to the nucleus. Component of the integrator complex, a multiprotein complex that terminates RNA polymerase II (Pol II) transcription in the promoter-proximal region of genes. The integrator complex provides a quality checkpoint during transcription elongation by driving premature transcription termination of transcripts that are unfavorably configured for transcriptional elongation: the complex terminates transcription by (1) catalyzing dephosphorylation of the C-terminal domain (CTD) of Pol II subunit Polr2A/Rbp1 and Spt5, and (2) degrading the exiting nascent RNA transcript via endonuclease activity. The integrator complex is also involved in the 3'-end processing of the U7 snRNA, and also the spliceosomal snRNAs U1, U2, U4 and U5. This chain is Integrator complex subunit 4, found in Drosophila melanogaster (Fruit fly).